The chain runs to 750 residues: Eukaryotic translation initiation factor 3 subunit B (750 aa).

Residues 42–128 enclose the RRM domain; the sequence is TFVVVDGLPE…HTLRVNKMTD (87 aa). WD repeat units follow at residues 195-234, 236-292, 309-348, and 519-562; these read DRQQWTETFVQWSPQGTYLTSVHAQGVLLWGGASWARLRR, PHPF…PLRS, SAKFPWPAFKWSADDKYVARLNQGTSISVYELPKMNLMDK, and LDKK…EKPE.

Belongs to the eIF-3 subunit B family. In terms of assembly, component of the eukaryotic translation initiation factor 3 (eIF-3) complex.

The protein localises to the cytoplasm. RNA-binding component of the eukaryotic translation initiation factor 3 (eIF-3) complex, which is involved in protein synthesis of a specialized repertoire of mRNAs and, together with other initiation factors, stimulates binding of mRNA and methionyl-tRNAi to the 40S ribosome. The eIF-3 complex specifically targets and initiates translation of a subset of mRNAs involved in cell proliferation. The polypeptide is Eukaryotic translation initiation factor 3 subunit B (Chaetomium globosum (strain ATCC 6205 / CBS 148.51 / DSM 1962 / NBRC 6347 / NRRL 1970) (Soil fungus)).